The chain runs to 397 residues: Riboflavin biosynthesis protein RibBA (397 aa).

The DHBP synthase stretch occupies residues 1 to 199 (MFHRIEEALE…IEDLIAYRRH (199 aa)). D-ribulose 5-phosphate-binding positions include 26 to 27 (RE), Asp31, 138 to 142 (RAGHT), and Glu162. Glu27 serves as a coordination point for Mg(2+). His141 is a Mg(2+) binding site. A GTP cyclohydrolase II region spans residues 200 to 397 (HETLVTREAE…VNKLGHLLNL (198 aa)). 250 to 254 (RVHSE) contributes to the GTP binding site. Positions 255, 266, and 268 each coordinate Zn(2+). Residues Gln271, 293–295 (EGR), and Thr315 each bind GTP. Asp327 acts as the Proton acceptor; for GTP cyclohydrolase activity in catalysis. Residue Arg329 is the Nucleophile; for GTP cyclohydrolase activity of the active site. GTP contacts are provided by Thr350 and Lys355.

In the N-terminal section; belongs to the DHBP synthase family. It in the C-terminal section; belongs to the GTP cyclohydrolase II family. It depends on Mg(2+) as a cofactor. The cofactor is Mn(2+). Requires Zn(2+) as cofactor.

It carries out the reaction D-ribulose 5-phosphate = (2S)-2-hydroxy-3-oxobutyl phosphate + formate + H(+). The catalysed reaction is GTP + 4 H2O = 2,5-diamino-6-hydroxy-4-(5-phosphoribosylamino)-pyrimidine + formate + 2 phosphate + 3 H(+). Its pathway is cofactor biosynthesis; riboflavin biosynthesis; 2-hydroxy-3-oxobutyl phosphate from D-ribulose 5-phosphate: step 1/1. It functions in the pathway cofactor biosynthesis; riboflavin biosynthesis; 5-amino-6-(D-ribitylamino)uracil from GTP: step 1/4. In terms of biological role, catalyzes the conversion of D-ribulose 5-phosphate to formate and 3,4-dihydroxy-2-butanone 4-phosphate. Its function is as follows. Catalyzes the conversion of GTP to 2,5-diamino-6-ribosylamino-4(3H)-pyrimidinone 5'-phosphate (DARP), formate and pyrophosphate. The sequence is that of Riboflavin biosynthesis protein RibBA from Bacillus cereus (strain ATCC 14579 / DSM 31 / CCUG 7414 / JCM 2152 / NBRC 15305 / NCIMB 9373 / NCTC 2599 / NRRL B-3711).